We begin with the raw amino-acid sequence, 227 residues long: Transmembrane emp24 domain-containing protein 4 (227 aa).

A signal peptide spans 1-29; sequence MAGVGAGPLRAMGRQALLLLALCATGAQG. The Lumenal segment spans residues 30–194; that stretch reads LYFHIGETEK…RLTSESTNQR (165 aa). Residues 39 to 137 form the GOLD domain; sequence KRCFIEEIPD…KLRVHLDIQV (99 aa). Residue Asn-117 is glycosylated (N-linked (GlcNAc...) asparagine). Residues 147–176 are a coiled coil; sequence IAAKDKLTELQLRARQLLDQVEQIQKEQDY. A helical membrane pass occupies residues 195-212; that stretch reads VLWWSIAQTVILILTGIW. The Cytoplasmic portion of the chain corresponds to 213 to 227; it reads QMRHLKSFFEAKKLV. The COPII vesicle coat-binding signature appears at 220 to 221; the sequence is FF. The COPI vesicle coat-binding signature appears at 220-227; the sequence is FFEAKKLV.

The protein belongs to the EMP24/GP25L family.

It localises to the endoplasmic reticulum membrane. Functionally, involved in vesicular protein trafficking, mainly in the early secretory pathway. targeting. Involved in the maintenance of the Golgi apparatus. Appears to play a role in the biosynthesis of secreted cargo including processing. Involved in endoplasmic reticulum stress response. May play a role in the regulation of heat-shock response and apoptosis. This chain is Transmembrane emp24 domain-containing protein 4 (TMED4), found in Homo sapiens (Human).